The sequence spans 270 residues: Sec-independent protein translocase protein TatC (270 aa).

The next 6 membrane-spanning stretches (helical) occupy residues 25-45, 75-95, 111-131, 156-176, 195-211, and 213-233; these read FIAVGVGFVIAYCFKERLFDI, VSLLTGVILATPVLFYEFWMF, VVILSIFFFCVGSSFGYFIVF, LGFASKMLLAFGFVFELPLVL, KYAILIFFTGAALITPP, and VVTQIMMAIPLMILYEISIIG. A disordered region spans residues 243–270; it reads SDEEEAAENSDVQTDKSTDDTTPGEDQN.

Belongs to the TatC family. As to quaternary structure, the Tat system comprises two distinct complexes: a TatABC complex, containing multiple copies of TatA, TatB and TatC subunits, and a separate TatA complex, containing only TatA subunits. Substrates initially bind to the TatABC complex, which probably triggers association of the separate TatA complex to form the active translocon.

Its subcellular location is the cell inner membrane. Its function is as follows. Part of the twin-arginine translocation (Tat) system that transports large folded proteins containing a characteristic twin-arginine motif in their signal peptide across membranes. Together with TatB, TatC is part of a receptor directly interacting with Tat signal peptides. This is Sec-independent protein translocase protein TatC from Desulforapulum autotrophicum (strain ATCC 43914 / DSM 3382 / VKM B-1955 / HRM2) (Desulfobacterium autotrophicum).